Consider the following 844-residue polypeptide: Nitrogen permease regulator 3 (844 aa).

The N-terminal stretch at 1 to 21 (MSTNLPNSCLVQIALTVSTHS) is a signal peptide. Disordered stretches follow at residues 53–113 (EYTD…TFIN) and 246–310 (GRWK…DYEP). Residues 57 to 94 (SENNSSSDDYSSGLSDSELSTDYADCSSDASESSLDSL) show a composition bias toward low complexity. Positions 103 to 113 (VNSSTNNTFIN) are enriched in polar residues. Residues 246-262 (GRWKKSKKRKQASKRSA) are compositionally biased toward basic residues. Over residues 263-273 (RSSTARNSISR) the composition is skewed to low complexity. The segment covering 274–293 (NSVGRNSIGRNRSKTESQGH) has biased composition (polar residues). Acidic residues predominate over residues 297 to 307 (VEEPADDENSD).

It belongs to the NPR3 family.

Functionally, mediates inactivation of the TORC1 complex in response to amino acid starvation. Required for meiotic nuclear division. The protein is Nitrogen permease regulator 3 (NPR3) of Kluyveromyces lactis (strain ATCC 8585 / CBS 2359 / DSM 70799 / NBRC 1267 / NRRL Y-1140 / WM37) (Yeast).